We begin with the raw amino-acid sequence, 437 residues long: Glutamyl-tRNA reductase (437 aa).

Substrate-binding positions include Thr-46–Arg-49, Ser-111, Glu-116–Glu-118, and Gln-122. The Nucleophile role is filled by Cys-47. Residue Gly-192–Ala-197 participates in NADP(+) binding. The segment at Pro-413–Gly-437 is disordered. Residues Asp-426 to Gly-437 show a composition bias toward basic and acidic residues.

It belongs to the glutamyl-tRNA reductase family. As to quaternary structure, homodimer.

The catalysed reaction is (S)-4-amino-5-oxopentanoate + tRNA(Glu) + NADP(+) = L-glutamyl-tRNA(Glu) + NADPH + H(+). It functions in the pathway porphyrin-containing compound metabolism; protoporphyrin-IX biosynthesis; 5-aminolevulinate from L-glutamyl-tRNA(Glu): step 1/2. Its function is as follows. Catalyzes the NADPH-dependent reduction of glutamyl-tRNA(Glu) to glutamate 1-semialdehyde (GSA). This is Glutamyl-tRNA reductase from Kocuria rhizophila (strain ATCC 9341 / DSM 348 / NBRC 103217 / DC2201).